We begin with the raw amino-acid sequence, 470 residues long: Solute carrier family 7 member 13 (470 aa).

Over 1 to 11 the chain is Cytoplasmic; it reads MDRGEKIQLKR. The helical transmembrane segment at 12–32 threads the bilayer; the sequence is VFGYWWGTSFLLINIIGAGIF. Over 33–45 the chain is Extracellular; the sequence is VSPKGVLAYSCMN. Residues 46 to 66 form a helical membrane-spanning segment; it reads VGVSLCVWAGCAILAMTSTLC. At 67-87 the chain is on the cytoplasmic side; it reads SAEISISFPCSGAQYYFLKRY. The helical transmembrane segment at 88–108 threads the bilayer; it reads FGSTVAFLNLWTSLFLGSGVV. The Extracellular segment spans residues 109-128; the sequence is AGQALLLAEYSIQPFFPSCS. Residues 129-149 traverse the membrane as a helical segment; it reads VPKLPKKCLALAMLWIVGILT. Over 150–162 the chain is Cytoplasmic; the sequence is SRGVKEVTWLQIA. A helical transmembrane segment spans residues 163-183; sequence SSVLKVSILSFISLTGVVFLI. At 184 to 206 the chain is on the extracellular side; it reads RGKKENVERFQNAFDAELPDISH. A helical membrane pass occupies residues 207–227; that stretch reads LIQAIFQGYFAYSGGACFTLI. The Cytoplasmic portion of the chain corresponds to 228 to 240; the sequence is AGELKKPRTTIPK. The helical transmembrane segment at 241-261 threads the bilayer; that stretch reads CIFTALPLVTVVYLLVNISYL. At 262 to 287 the chain is on the extracellular side; it reads TVLTPREILSSDAVAITWADRAFPSL. Residues 288–308 form a helical membrane-spanning segment; the sequence is AWIMPFAISTSLFSNLLISIF. Residues 309–336 are Cytoplasmic-facing; sequence KSSRPIYLASQEGQLPLLFNTLNSHSSP. A helical transmembrane segment spans residues 337–357; the sequence is FTAVLLLVTLGSLAIILTSLI. Residue aspartate 358 is a topological domain, extracellular. Residues 359–379 form a helical membrane-spanning segment; the sequence is LINYIFFTGSLWSILLMIGIL. At 380 to 393 the chain is on the cytoplasmic side; that stretch reads RRRYQEPNLSIPYK. The helical transmembrane segment at 394 to 414 threads the bilayer; sequence VFLSFPLATIVIDVGLVVIPL. Residues 415 to 421 are Extracellular-facing; the sequence is VKSPNVH. Residues 422–442 traverse the membrane as a helical segment; that stretch reads YVYVLLLVLSGLLFYIPLIHF. The Cytoplasmic portion of the chain corresponds to 443-470; that stretch reads KIRLAWFEKMTCYLQLLFNICLPDVSEE.

The protein belongs to the amino acid-polyamine-organocation (APC) superfamily. As to quaternary structure, disulfide-linked heterodimer composed of the catalytic light subunit SLC7A13 and the heavy subunit SLC3A1. Expressed in the kidney.

Its subcellular location is the apical cell membrane. The enzyme catalyses L-cystine(out) + L-aspartate(in) = L-cystine(in) + L-aspartate(out). It carries out the reaction L-cystine(out) = L-cystine(in). The catalysed reaction is L-aspartate(in) + L-glutamate(out) = L-aspartate(out) + L-glutamate(in). It catalyses the reaction L-aspartate(in) + L-glutamine(out) = L-aspartate(out) + L-glutamine(in). The enzyme catalyses L-aspartate(in) + L-methionine(out) = L-aspartate(out) + L-methionine(in). It carries out the reaction L-leucine(out) + L-aspartate(in) = L-leucine(in) + L-aspartate(out). The catalysed reaction is L-valine(out) + L-aspartate(in) = L-valine(in) + L-aspartate(out). It catalyses the reaction L-aspartate(in) + L-phenylalanine(out) = L-aspartate(out) + L-phenylalanine(in). The enzyme catalyses L-tyrosine(out) + L-aspartate(in) = L-tyrosine(in) + L-aspartate(out). It carries out the reaction L-tryptophan(out) + L-aspartate(in) = L-tryptophan(in) + L-aspartate(out). Functionally, associates with SLC3A1/rBAT to form a functional heterodimeric complex that transports anionic and neutral amino acids across the apical plasma membrane of renal epithelium. Preferentially mediates exchange transport, but can also operate via facilitated diffusion. May act as a major transporter for L-cystine in late proximal tubules, ensuring its reabsorption from the luminal fluid in exchange for cytosolic L-glutamate or L-aspartate. This Homo sapiens (Human) protein is Solute carrier family 7 member 13 (SLC7A13).